Consider the following 186-residue polypeptide: Probable nicotinate-nucleotide adenylyltransferase (186 aa).

This sequence belongs to the NadD family.

The enzyme catalyses nicotinate beta-D-ribonucleotide + ATP + H(+) = deamido-NAD(+) + diphosphate. Its pathway is cofactor biosynthesis; NAD(+) biosynthesis; deamido-NAD(+) from nicotinate D-ribonucleotide: step 1/1. Its function is as follows. Catalyzes the reversible adenylation of nicotinate mononucleotide (NaMN) to nicotinic acid adenine dinucleotide (NaAD). In Tropheryma whipplei (strain Twist) (Whipple's bacillus), this protein is Probable nicotinate-nucleotide adenylyltransferase.